The chain runs to 140 residues: Photosystem I reaction center subunit XI (140 aa).

3 consecutive transmembrane segments (helical) span residues 48-68 (LEIGMAHGYFLIGPFVQLGPL), 79-99 (LLSAIGLIVILTLGMLLYGAV), and 119-139 (SGFLLGAVGGAGFAYLLLTLF).

It belongs to the PsaL family.

It is found in the plastid. It localises to the chloroplast thylakoid membrane. This chain is Photosystem I reaction center subunit XI, found in Cyanidioschyzon merolae (strain NIES-3377 / 10D) (Unicellular red alga).